An 88-amino-acid chain; its full sequence is EMBRYO SURROUNDING FACTOR 1-like protein 11 (88 aa).

Positions 1-23 are cleaved as a signal peptide; it reads MISSSHFAIFCIILVSLFALQQY. 4 disulfides stabilise this stretch: Cys44/Cys59, Cys49/Cys78, Cys57/Cys74, and Cys60/Cys67.

It belongs to the MEG family. As to expression, expressed in stems.

This is EMBRYO SURROUNDING FACTOR 1-like protein 11 (ESFL11) from Arabidopsis thaliana (Mouse-ear cress).